Reading from the N-terminus, the 251-residue chain is Aquaporin (251 aa).

The Cytoplasmic portion of the chain corresponds to 1–11 (MAKEALKTLQS). A helical transmembrane segment spans residues 12–32 (MFGEMVASFVFGFAVYSAILG). Topologically, residues 33-42 (SSISQSSADK) are extracellular. A helical transmembrane segment spans residues 43-63 (VIVGLTVGFSGIGVIYSFCDV). Residues 64 to 86 (TIAHFNPAITLAAILTSKIDVLQ) lie on the Cytoplasmic side of the membrane. The NPA signature appears at 69-71 (NPA). A helical transmembrane segment spans residues 87-107 (GLGYMLAQYIGFMLAVCALLV). The Extracellular portion of the chain corresponds to 108–133 (CSPVEYKETLDTIRPGPTDFGATSLN). Residues 134–154 (VFFAEFFLTAIFVHIVFATAV) traverse the membrane as a helical segment. The Cytoplasmic portion of the chain corresponds to 155–179 (NPYKPKVDTEGKFVDPDEKEPVDRR). A helical transmembrane segment spans residues 180-200 (ITAPLCIGLTLGFLAFMGLAS). At 201–224 (SGGAFNPGLTFAPMAMSNTWSHFW) the chain is on the extracellular side. Residues 206–208 (NPG) carry the NPG motif. A helical transmembrane segment spans residues 225–245 (IYLGGQYLGGLTGGLLQVLVL). Residues 246-251 (YKLSSD) are Cytoplasmic-facing.

This sequence belongs to the MIP/aquaporin (TC 1.A.8) family.

It is found in the cell membrane. Functionally, water channel required to facilitate the transport of water across membranes. Involved in osmotolerance. The polypeptide is Aquaporin (AQP) (Encephalitozoon intestinalis (Microsporidian parasite)).